We begin with the raw amino-acid sequence, 277 residues long: Release factor glutamine methyltransferase (277 aa).

Residues 117–121 (GTGTG), Asp-140, Trp-168, and Asn-183 each bind S-adenosyl-L-methionine. Substrate is bound at residue 183-186 (NPPY).

It belongs to the protein N5-glutamine methyltransferase family. PrmC subfamily.

It catalyses the reaction L-glutaminyl-[peptide chain release factor] + S-adenosyl-L-methionine = N(5)-methyl-L-glutaminyl-[peptide chain release factor] + S-adenosyl-L-homocysteine + H(+). Its function is as follows. Methylates the class 1 translation termination release factors RF1/PrfA and RF2/PrfB on the glutamine residue of the universally conserved GGQ motif. This chain is Release factor glutamine methyltransferase, found in Shigella dysenteriae serotype 1 (strain Sd197).